Consider the following 313-residue polypeptide: Methionyl-tRNA formyltransferase (313 aa).

113–116 contacts (6S)-5,6,7,8-tetrahydrofolate; that stretch reads SLLP.

The protein belongs to the Fmt family.

It catalyses the reaction L-methionyl-tRNA(fMet) + (6R)-10-formyltetrahydrofolate = N-formyl-L-methionyl-tRNA(fMet) + (6S)-5,6,7,8-tetrahydrofolate + H(+). In terms of biological role, attaches a formyl group to the free amino group of methionyl-tRNA(fMet). The formyl group appears to play a dual role in the initiator identity of N-formylmethionyl-tRNA by promoting its recognition by IF2 and preventing the misappropriation of this tRNA by the elongation apparatus. This Francisella tularensis subsp. novicida (strain U112) protein is Methionyl-tRNA formyltransferase.